Consider the following 396-residue polypeptide: Multidrug efflux protein YfmO (396 aa).

The next 12 membrane-spanning stretches (helical) occupy residues 20–40 (VWAV…VDPI), 56–76 (SLLF…SGAI), 80–100 (IGAK…AGLG), 114–134 (GGWG…IVGV), 142–162 (AIIL…LAGG), 171–191 (APFF…SFML), 214–234 (GLLT…ILLA), 249–269 (YVFF…APLV), 278–298 (SLVV…IWTD), 301–321 (TLII…NTIM), 339–359 (AYSS…GMLS), and 364–384 (ASTP…VLLM).

It belongs to the major facilitator superfamily.

The protein resides in the cell membrane. In terms of biological role, acts to efflux copper or a copper complex. It is possible that YfmO could contribute to copper resistance. In Bacillus subtilis (strain 168), this protein is Multidrug efflux protein YfmO (yfmO).